The primary structure comprises 1470 residues: Niemann-Pick type C1-related protein (1470 aa).

Over 1–3 (MFV) the chain is Cytoplasmic. The stretch at 4–34 (KNFIHKLKELKQKSLDKFANLLYDYGGYVYD) is an intramembrane region. A topological domain (cytoplasmic) is located at residue R35. A helical membrane pass occupies residues 36–56 (PCTFIICSLICCLLLTCGFYF). Topologically, residues 57-493 (KEHEKDIYKL…DEVDRISKID (437 aa)) are extracellular. 4 N-linked (GlcNAc...) asparagine glycosylation sites follow: N78, N165, N294, and N361. A helical membrane pass occupies residues 494–514 (NLTRLLLLIGVLLIFMYALFN). The SSD domain occupies 494–653 (NLTRLLLLIG…LTFLLSFLCI (160 aa)). Topologically, residues 515 to 524 (NVTSVLYRSK) are cytoplasmic. Residues 525 to 549 (PLCAVMGIFCGFLGFLSGSGFLYFL) form a helical membrane-spanning segment. Residues 550-554 (GVKSV) lie on the Extracellular side of the membrane. Residues 555 to 582 (PPAETVPFLVIGVGVDDVFVILNSYSLL) form a helical membrane-spanning segment. Over 583-587 (FMVKD) the chain is Cytoplasmic. Residues 588–619 (NKKRIQMCLKDSALAITVTTLTNIIAFLISAI) form a helical membrane-spanning segment. At 620–622 (SPF) the chain is on the extracellular side. A helical membrane pass occupies residues 623–659 (YSICAFSLFTASSLFFGYLMVLTFLLSFLCIEAKLEK). Residues 660-663 (KKRN) lie on the Cytoplasmic side of the membrane. An intramembrane segment occupies 664-673 (IFTGTFHLFR). At 674–1057 (SIFMKSSKKN…IYEEPKGNIG (384 aa)) the chain is on the cytoplasmic side. An intramembrane segment occupies 1058–1073 (KYFRSLVKNYYVPFLS). Residue S1074 is a topological domain, cytoplasmic. The chain crosses the membrane as a helical span at residues 1075 to 1098 (RFGKTIVYIMFTIIIAMSIYGCTL). Topologically, residues 1099-1300 (MKKGIKYDKA…NHNVQMVCFH (202 aa)) are extracellular. Residue N1218 is glycosylated (N-linked (GlcNAc...) asparagine). The helical transmembrane segment at 1301–1334 (LSSIFNETDESIIEVTLINLGITILTILVVTAYI) threads the bilayer. Over 1335–1337 (IKG) the chain is Cytoplasmic. A helical membrane pass occupies residues 1338 to 1361 (FYSCVIIALIIFLIDLCIFGFMCL). The Extracellular segment spans residues 1362–1367 (CGITMN). The chain crosses the membrane as a helical span at residues 1368–1394 (IISMVILVLSVGFSIDHTSHIVQAFSH). Residues 1395-1399 (SMGRT) are Cytoplasmic-facing. A helical transmembrane segment spans residues 1400–1431 (RDEKMKESLHLMIGPVLHSGLSTWFVISTLFF). At 1432-1434 (SNK) the chain is on the extracellular side. Residues 1435–1466 (DFTVIFFQTLSLVLFFSITFSSMFLPVLLSSF) traverse the membrane as a helical segment. Topologically, residues 1467 to 1470 (GPLH) are cytoplasmic.

Belongs to the patched family.

It localises to the cell membrane. The catalysed reaction is cholesterol(in) = cholesterol(out). In terms of biological role, facilitates cholesterol efflux from membranes in a pH-dependent manner. Required for maintaining normal parasite plasma membrane lipid composition. Required for the proper functioning of digestive vacuole. Required for the viability of blood-stage parasites. The polypeptide is Niemann-Pick type C1-related protein (Plasmodium falciparum (isolate 3D7)).